We begin with the raw amino-acid sequence, 79 residues long: Large ribosomal subunit protein uL22 (79 aa).

This sequence belongs to the universal ribosomal protein uL22 family. Part of the 50S ribosomal subunit.

Functionally, this protein binds specifically to 23S rRNA; its binding is stimulated by other ribosomal proteins, e.g. L4, L17, and L20. It is important during the early stages of 50S assembly. It makes multiple contacts with different domains of the 23S rRNA in the assembled 50S subunit and ribosome. The globular domain of the protein is located near the polypeptide exit tunnel on the outside of the subunit, while an extended beta-hairpin is found that lines the wall of the exit tunnel in the center of the 70S ribosome. This chain is Large ribosomal subunit protein uL22 (rplV), found in Clover proliferation phytoplasma.